The primary structure comprises 235 residues: Protein YIP4 (235 aa).

5 consecutive transmembrane segments (helical) span residues 89 to 109 (ISAN…SLFV), 114 to 134 (SLFS…ALHL), 145 to 165 (LISY…NALV), 186 to 206 (VLSL…VAAV), and 215 to 235 (IIEI…STIL).

The protein belongs to the YIP1 family. In terms of assembly, interacts with TVP18, TVP23, YIP1 and YIP5. Interacts with SEC4, YPT1, YPT6, YPT7, YPT10, YPT11, YPT31, YPT32 and YPT52; These proteins are all Rab GTPases.

The protein localises to the golgi apparatus membrane. Its function is as follows. May be involved in proper membrane localization of Rab GTPases. The chain is Protein YIP4 (YIP4) from Saccharomyces cerevisiae (strain ATCC 204508 / S288c) (Baker's yeast).